Reading from the N-terminus, the 233-residue chain is Pyridoxal 5'-phosphate synthase subunit PdxT (233 aa).

61–63 (GES) is an L-glutamine binding site. Residue cysteine 93 is the Nucleophile of the active site. Residues arginine 127 and 163–164 (IR) contribute to the L-glutamine site. Catalysis depends on charge relay system residues histidine 212 and glutamate 214.

Belongs to the glutaminase PdxT/SNO family. As to quaternary structure, in the presence of PdxS, forms a dodecamer of heterodimers. Only shows activity in the heterodimer.

The catalysed reaction is aldehydo-D-ribose 5-phosphate + D-glyceraldehyde 3-phosphate + L-glutamine = pyridoxal 5'-phosphate + L-glutamate + phosphate + 3 H2O + H(+). It carries out the reaction L-glutamine + H2O = L-glutamate + NH4(+). The protein operates within cofactor biosynthesis; pyridoxal 5'-phosphate biosynthesis. Catalyzes the hydrolysis of glutamine to glutamate and ammonia as part of the biosynthesis of pyridoxal 5'-phosphate. The resulting ammonia molecule is channeled to the active site of PdxS. This Paenarthrobacter aurescens (strain TC1) protein is Pyridoxal 5'-phosphate synthase subunit PdxT.